The chain runs to 171 residues: Peptide deformylase (171 aa).

Residues Cys-91 and His-133 each coordinate Fe cation. The active site involves Glu-134. Residue His-137 coordinates Fe cation.

Belongs to the polypeptide deformylase family. Fe(2+) serves as cofactor.

It carries out the reaction N-terminal N-formyl-L-methionyl-[peptide] + H2O = N-terminal L-methionyl-[peptide] + formate. Removes the formyl group from the N-terminal Met of newly synthesized proteins. Requires at least a dipeptide for an efficient rate of reaction. N-terminal L-methionine is a prerequisite for activity but the enzyme has broad specificity at other positions. The sequence is that of Peptide deformylase from Hamiltonella defensa subsp. Acyrthosiphon pisum (strain 5AT).